A 62-amino-acid chain; its full sequence is Metallothionein-4 (62 aa).

Residues C6, C8, C14, C16, C20, C22, C25, C27, C34, C35, C37, C38, C42, C45, C49, C51, C58, C60, and C61 each contribute to the a divalent metal cation site.

It belongs to the metallothionein superfamily. Type 1 family.

Seems to bind zinc and copper. Could play a special role in regulating zinc metabolism during the differentiation of stratified epithelia. This Homo sapiens (Human) protein is Metallothionein-4 (MT4).